The sequence spans 239 residues: Serine protease SplC (239 aa).

The N-terminal stretch at 1–36 (MNKNIVIKSMAALAILTSVTGINAAVVEETQQIANA) is a signal peptide. Active-site charge relay system residues include H75, D113, and S193.

Belongs to the peptidase S1B family.

It localises to the secreted. The chain is Serine protease SplC (splC) from Staphylococcus aureus.